The following is a 778-amino-acid chain: DNA topoisomerase 1 (778 aa).

The segment at 1–141 is disordered; that stretch reads MNSSDEEDIA…ETPEEDQGYK (141 aa). Positions 17–26 are enriched in low complexity; sequence KSSSITSAST. Composition is skewed to basic and acidic residues over residues 71 to 83 and 100 to 121; these read VKTE…EPKS and EKTT…ESKT. A compositionally biased stretch (polar residues) spans 122 to 131; sequence QSDSQASVKS. Interaction with DNA stretches follow at residues 367 to 368, 430 to 435, and 522 to 524; these read KY, RAGGEK, and TAK. In terms of domain architecture, Topo IB-type catalytic spans 374–778; that stretch reads NSSVKGQSDF…IESADENWRF (405 aa). The active-site O-(3'-phospho-DNA)-tyrosine intermediate is Tyr736.

This sequence belongs to the type IB topoisomerase family.

It catalyses the reaction ATP-independent breakage of single-stranded DNA, followed by passage and rejoining.. In terms of biological role, releases the supercoiling and torsional tension of DNA introduced during the DNA replication and transcription by transiently cleaving and rejoining one strand of the DNA duplex. Introduces a single-strand break via transesterification at a target site in duplex DNA. The scissile phosphodiester is attacked by the catalytic tyrosine of the enzyme, resulting in the formation of a DNA-(3'-phosphotyrosyl)-enzyme intermediate and the expulsion of a 5'-OH DNA strand. The free DNA strand then rotates around the intact phosphodiester bond on the opposing strand, thus removing DNA supercoils. Finally, in the religation step, the DNA 5'-OH attacks the covalent intermediate to expel the active-site tyrosine and restore the DNA phosphodiester backbone. This chain is DNA topoisomerase 1 (TOP1), found in Candida albicans (Yeast).